A 195-amino-acid chain; its full sequence is Small ribosomal subunit protein uS4c (195 aa).

Residues 82 to 143 enclose the S4 RNA-binding domain; it reads MRLDNILFRL…KQRSKALIQN (62 aa).

Belongs to the universal ribosomal protein uS4 family. In terms of assembly, part of the 30S ribosomal subunit. Contacts protein S5. The interaction surface between S4 and S5 is involved in control of translational fidelity.

The protein localises to the plastid. It is found in the chloroplast. Its function is as follows. One of the primary rRNA binding proteins, it binds directly to 16S rRNA where it nucleates assembly of the body of the 30S subunit. Functionally, with S5 and S12 plays an important role in translational accuracy. This is Small ribosomal subunit protein uS4c (rps4) from Gladiolus murielae (Abyssinian gladiolus).